Reading from the N-terminus, the 347-residue chain is Protein phosphatase 1 regulatory subunit 3G (347 aa).

Residues 1 to 77 form a disordered region; that stretch reads MDPSGEQLHR…ELQEYRRSRA (77 aa). A compositionally biased stretch (polar residues) spans 13–22; that stretch reads ASSSTSSGDP. At serine 81 the chain carries Phosphoserine. Residues 200–339 enclose the CBM21 domain; the sequence is EERLRRQRVC…NNEGANYTLR (140 aa). Residues 258 to 286 form a disordered region; the sequence is DPESVEPLPPLQSGDSGSKAEDSEEGPGT.

Its function is as follows. Glycogen-targeting subunit for protein phosphatase 1 (PP1). Involved in the regulation of hepatic glycogenesis in a manner coupled to the fasting-feeding cycle and distinct from other glycogen-targeting subunits. This Mus musculus (Mouse) protein is Protein phosphatase 1 regulatory subunit 3G (Ppp1r3g).